A 257-amino-acid polypeptide reads, in one-letter code: E3 ubiquitin-protein ligase RNF170 (257 aa).

Over 1-24 (MADNQEERPHFPLDEGSIIEGVSD) the chain is Lumenal. A helical membrane pass occupies residues 25-45 (QVIVVVLLSFVAVGSLIYLLL). The Cytoplasmic portion of the chain corresponds to 46–200 (RNDEQNIHPE…GGLFWMFRIR (155 aa)). An RING-type zinc finger spans residues 87–130 (CPVCLQQATFPVETNCGHLFCGSCIIAYWRYGTWLGAINCPICR). A helical membrane pass occupies residues 201-221 (IVLCLLGALLYLVSPLDIIPE). Alanine 222 is a topological domain (lumenal). The helical transmembrane segment at 223–243 (LFGILGFLDDLFVLFLLLIYI) threads the bilayer. The Cytoplasmic segment spans residues 244 to 257 (SIMYREVVTQRLYR).

The protein localises to the endoplasmic reticulum membrane. The enzyme catalyses S-ubiquitinyl-[E2 ubiquitin-conjugating enzyme]-L-cysteine + [acceptor protein]-L-lysine = [E2 ubiquitin-conjugating enzyme]-L-cysteine + N(6)-ubiquitinyl-[acceptor protein]-L-lysine.. It functions in the pathway protein modification; protein ubiquitination. In terms of biological role, E3 ubiquitin-protein ligase that plays an essential role in stimulus-induced inositol 1,4,5-trisphosphate receptor (ITPR) ubiquitination and degradation via the endoplasmic reticulum-associated degradation (ERAD) pathway. Also involved in ITPR turnover in resting cells. The chain is E3 ubiquitin-protein ligase RNF170 (rnf170) from Xenopus laevis (African clawed frog).